Reading from the N-terminus, the 194-residue chain is Protein DROOPING LEAF (194 aa).

The C4-type zinc finger occupies cysteine 15–cysteine 42. A disordered region spans residues leucine 83–glutamate 103.

It belongs to the YABBY family.

It is found in the nucleus. Functionally, regulates carpel specification in flower development. Severe or intermediate mutation in DL causes complete or partial homeotic conversion of carpels into stamens without affecting the identities of other floral organs. Interacts antagonistically with class B genes and controls floral meristem determinacy. Regulates midrib formation in leaves probably by inducing cell proliferation in the central region of the leaf. In Oryza sativa subsp. japonica (Rice), this protein is Protein DROOPING LEAF (DL).